Here is a 329-residue protein sequence, read N- to C-terminus: Serpentine receptor class alpha-3 (329 aa).

Helical transmembrane passes span 25 to 45 (LIYF…LKVI), 57 to 77 (ILLY…GITI), 104 to 124 (YLEM…GLLF), 144 to 164 (GIIT…IIIW), 187 to 207 (TMFF…SLLI), 238 to 258 (ICFL…GVFL), and 273 to 293 (FWVV…ILLI).

It belongs to the nematode receptor-like protein sra family.

It localises to the membrane. In Caenorhabditis elegans, this protein is Serpentine receptor class alpha-3 (sra-3).